We begin with the raw amino-acid sequence, 306 residues long: Pantothenate kinase (306 aa).

ATP is bound at residue 91-98; sequence GSVAVGKS.

It belongs to the prokaryotic pantothenate kinase family.

The protein localises to the cytoplasm. The enzyme catalyses (R)-pantothenate + ATP = (R)-4'-phosphopantothenate + ADP + H(+). It participates in cofactor biosynthesis; coenzyme A biosynthesis; CoA from (R)-pantothenate: step 1/5. This chain is Pantothenate kinase, found in Streptococcus pneumoniae serotype 19F (strain G54).